A 321-amino-acid polypeptide reads, in one-letter code: MATH domain and coiled-coil domain-containing protein At3g58410 (321 aa).

In terms of domain architecture, MATH spans 6–128 (GKKFAWVIKN…NGELMIVAEV (123 aa)). Residues 255–310 (KVDWLEKKLDQVRDKKEKERSCLAKLQETEETLLKLKQKCTELDALMDTEKAELSA) adopt a coiled-coil conformation.

The sequence is that of MATH domain and coiled-coil domain-containing protein At3g58410 from Arabidopsis thaliana (Mouse-ear cress).